The primary structure comprises 122 residues: Small ribosomal subunit protein bS16 (122 aa).

The tract at residues 85-122 (REAKNNPIKAKPGKRAQERAAEKAQKAADAAAAADAAE) is disordered. Positions 99-110 (RAQERAAEKAQK) are enriched in basic and acidic residues. Residues 111–122 (AADAAAAADAAE) are compositionally biased toward low complexity.

This sequence belongs to the bacterial ribosomal protein bS16 family.

In Rhizobium etli (strain ATCC 51251 / DSM 11541 / JCM 21823 / NBRC 15573 / CFN 42), this protein is Small ribosomal subunit protein bS16.